A 309-amino-acid chain; its full sequence is Glutaminase (309 aa).

Serine 65, asparagine 117, glutamate 162, asparagine 169, tyrosine 193, tyrosine 245, and valine 263 together coordinate substrate.

This sequence belongs to the glutaminase family. As to quaternary structure, homotetramer.

The enzyme catalyses L-glutamine + H2O = L-glutamate + NH4(+). This Clostridioides difficile (strain 630) (Peptoclostridium difficile) protein is Glutaminase.